Consider the following 202-residue polypeptide: ATP-dependent Clp protease proteolytic subunit (202 aa).

The active-site Nucleophile is the Ser101. His126 is a catalytic residue.

Belongs to the peptidase S14 family. As to quaternary structure, component of the chloroplastic Clp protease core complex.

The protein resides in the plastid. It is found in the chloroplast stroma. It carries out the reaction Hydrolysis of proteins to small peptides in the presence of ATP and magnesium. alpha-casein is the usual test substrate. In the absence of ATP, only oligopeptides shorter than five residues are hydrolyzed (such as succinyl-Leu-Tyr-|-NHMec, and Leu-Tyr-Leu-|-Tyr-Trp, in which cleavage of the -Tyr-|-Leu- and -Tyr-|-Trp bonds also occurs).. Functionally, cleaves peptides in various proteins in a process that requires ATP hydrolysis. Has a chymotrypsin-like activity. Plays a major role in the degradation of misfolded proteins. This is ATP-dependent Clp protease proteolytic subunit from Acorus calamus (Sweet flag).